The sequence spans 179 residues: Protein GrpE (179 aa).

Residues 1-23 (MSEEIKEQNVQDAQNENLAPDSV) are disordered.

Belongs to the GrpE family. Homodimer.

The protein localises to the cytoplasm. Functionally, participates actively in the response to hyperosmotic and heat shock by preventing the aggregation of stress-denatured proteins, in association with DnaK and GrpE. It is the nucleotide exchange factor for DnaK and may function as a thermosensor. Unfolded proteins bind initially to DnaJ; upon interaction with the DnaJ-bound protein, DnaK hydrolyzes its bound ATP, resulting in the formation of a stable complex. GrpE releases ADP from DnaK; ATP binding to DnaK triggers the release of the substrate protein, thus completing the reaction cycle. Several rounds of ATP-dependent interactions between DnaJ, DnaK and GrpE are required for fully efficient folding. This chain is Protein GrpE, found in Campylobacter curvus (strain 525.92).